Here is a 214-residue protein sequence, read N- to C-terminus: MPGYSDYIIRNASGLIPMVIEQTSRGERSYDIYSRLLKERIIFLLGEVEDHMANLVVAQLLFLESENPEKDISLYINSPGGVVTAGLAIYDTMQFIKPDVSTLCIGQAASAAALLLCAGAEGKRFCLPNSRVMIHQPLGGYRGQATDIEIHARETLAVRERLNNIMAKHTKKTPDQIMRDTERDNFMSATQAMEYGLIDKVLYDRQVAGHSTDL.

Catalysis depends on Ser110, which acts as the Nucleophile. Residue His135 is part of the active site.

It belongs to the peptidase S14 family. As to quaternary structure, fourteen ClpP subunits assemble into 2 heptameric rings which stack back to back to give a disk-like structure with a central cavity, resembling the structure of eukaryotic proteasomes.

It is found in the cytoplasm. The enzyme catalyses Hydrolysis of proteins to small peptides in the presence of ATP and magnesium. alpha-casein is the usual test substrate. In the absence of ATP, only oligopeptides shorter than five residues are hydrolyzed (such as succinyl-Leu-Tyr-|-NHMec, and Leu-Tyr-Leu-|-Tyr-Trp, in which cleavage of the -Tyr-|-Leu- and -Tyr-|-Trp bonds also occurs).. Functionally, cleaves peptides in various proteins in a process that requires ATP hydrolysis. Has a chymotrypsin-like activity. Plays a major role in the degradation of misfolded proteins. This Legionella pneumophila (strain Corby) protein is ATP-dependent Clp protease proteolytic subunit.